Reading from the N-terminus, the 230-residue chain is LexA repressor (230 aa).

The H-T-H motif DNA-binding region spans 28 to 48; that stretch reads IREIGEALDIRSTNGVNDHLK. Residues Ser-148 and Lys-185 each act as for autocatalytic cleavage activity in the active site.

This sequence belongs to the peptidase S24 family. Homodimer.

It carries out the reaction Hydrolysis of Ala-|-Gly bond in repressor LexA.. In terms of biological role, represses a number of genes involved in the response to DNA damage (SOS response), including recA and lexA. In the presence of single-stranded DNA, RecA interacts with LexA causing an autocatalytic cleavage which disrupts the DNA-binding part of LexA, leading to derepression of the SOS regulon and eventually DNA repair. The protein is LexA repressor of Anaeromyxobacter sp. (strain K).